We begin with the raw amino-acid sequence, 1304 residues long: TPR-containing protein DDB_G0280363 (1304 aa).

Disordered stretches follow at residues 19–85, 153–195, 296–334, 447–477, 576–687, and 706–728; these read QQHH…HPQQ, NINN…NSSL, LPSTNSSIVSRQQQLQQQQQKLKLKSSPSPISPFFYTQQ, GFNWSPSLQPDQSTSTNHTQAMLQQQQQRQQ, QNQQ…VTTI, and LTTVNHSKPPPNESKRGELVESP. Composition is skewed to low complexity over residues 25-44, 52-85, and 153-194; these read QQNNTQVQQQQQQHTTQFNQ, HQQHQQQQHHQQQHHQQQQQQQQQQQQQQQHPQQ, and NINN…NNSS. A compositionally biased stretch (polar residues) spans 296–306; that stretch reads LPSTNSSIVSR. A compositionally biased stretch (low complexity) spans 307–316; sequence QQQLQQQQQK. The span at 448–465 shows a compositional bias: polar residues; the sequence is FNWSPSLQPDQSTSTNHT. Low complexity-rich tracts occupy residues 466-477 and 576-597; these read QAMLQQQQQRQQ and QNQQQNQQQNQQQNQQHYPNQH. The span at 598 to 625 shows a compositional bias: basic residues; sequence HGQHQHNQHNQHHNQHHNQSHPNHKNQH. Residues 626 to 687 show a composition bias toward low complexity; the sequence is QKQNQTQQST…NNNTNNVTTI (62 aa). TPR repeat units lie at residues 769–802, 899–932, 978–1011, 1046–1079, 1084–1111, 1112–1150, and 1152–1184; these read WRVYLELADLANRQNNLKLARKFYRKVTSTQPYI, MKHVPWYGPIYQEAYKLEERCEEYERAINIVEKG, WKIYFEAAQIEERSKNLTLSRAAYVKSVELCPEN, SKLRSLVLLEYSRLEEYAGNINKSRRILKMAHVE, WKVFLESVLLEMRANNYEAAIKEAKESL, KIHSGAGRLWAALIQLNQLKGVKSQLNVFKKALQFVPKS, and EVWCEGARIALNNNELREARRFLEFAIQFTPQF.

The chain is TPR-containing protein DDB_G0280363 from Dictyostelium discoideum (Social amoeba).